The primary structure comprises 367 residues: Heme A synthase (367 aa).

Helical transmembrane passes span 25 to 45 (ALRL…LVGG), 111 to 131 (LIAR…WLTG), 139 to 159 (WPLV…WWMV), 174 to 194 (LATH…IMRG), 210 to 230 (GLAA…ALVA), 272 to 292 (FIHR…MVIA), 305 to 325 (AVLL…TLLM), and 327 to 347 (VPLH…GFAV). Histidine 274 is a heme binding site. Residue histidine 335 participates in heme binding.

Belongs to the COX15/CtaA family. Type 2 subfamily. In terms of assembly, interacts with CtaB. Heme b is required as a cofactor.

It is found in the cell membrane. It catalyses the reaction Fe(II)-heme o + 2 A + H2O = Fe(II)-heme a + 2 AH2. It functions in the pathway porphyrin-containing compound metabolism; heme A biosynthesis; heme A from heme O: step 1/1. Catalyzes the conversion of heme O to heme A by two successive hydroxylations of the methyl group at C8. The first hydroxylation forms heme I, the second hydroxylation results in an unstable dihydroxymethyl group, which spontaneously dehydrates, resulting in the formyl group of heme A. The sequence is that of Heme A synthase from Rhizobium etli (strain ATCC 51251 / DSM 11541 / JCM 21823 / NBRC 15573 / CFN 42).